The sequence spans 98 residues: MNLYDVIKKPVITEKSMIALEAGKYTFEVDTRAHKLLIKQAVEAAFDGVKVASVNTVNVKPKAKRVGRYTGFTSKTKKAIITLTADSKAIELFAAEAE.

This sequence belongs to the universal ribosomal protein uL23 family. Part of the 50S ribosomal subunit. Contacts protein L29, and trigger factor when it is bound to the ribosome.

Functionally, one of the early assembly proteins it binds 23S rRNA. One of the proteins that surrounds the polypeptide exit tunnel on the outside of the ribosome. Forms the main docking site for trigger factor binding to the ribosome. This is Large ribosomal subunit protein uL23 from Streptococcus pyogenes serotype M1.